The primary structure comprises 452 residues: Phosphoglucosamine mutase (452 aa).

Catalysis depends on Ser-108, which acts as the Phosphoserine intermediate. The Mg(2+) site is built by Ser-108, Asp-247, Asp-249, and Asp-251. A Phosphoserine modification is found at Ser-108.

It belongs to the phosphohexose mutase family. Mg(2+) is required as a cofactor. In terms of processing, activated by phosphorylation.

The catalysed reaction is alpha-D-glucosamine 1-phosphate = D-glucosamine 6-phosphate. In terms of biological role, catalyzes the conversion of glucosamine-6-phosphate to glucosamine-1-phosphate. The protein is Phosphoglucosamine mutase of Paraburkholderia phytofirmans (strain DSM 17436 / LMG 22146 / PsJN) (Burkholderia phytofirmans).